The chain runs to 20 residues: Ferric reductase A (20 aa).

As to quaternary structure, monomer.

The enzyme catalyses 2 a Fe(II)-siderophore + NAD(+) + H(+) = 2 a Fe(III)-siderophore + NADH. Its function is as follows. Reductase activity that acts on Fe(3+)-chelates and NADH as an electron donor and requires the presence of FMN for full activity. May play a role in iron uptake. This chain is Ferric reductase A (ferA), found in Paracoccus denitrificans.